Reading from the N-terminus, the 5588-residue chain is Histone-lysine N-methyltransferase 2D (5588 aa).

The interval 1-61 (MDSQKPPAED…QKPPHDCSRG (61 aa)) is disordered. A C2HC pre-PHD-type 1; degenerate zinc finger spans residues 104-149 (GPCEAVLPKEDASQIGFPEGLTPAHLGEPGGHCWAHHWCAAWSAGV). PHD-type zinc fingers lie at residues 170–218 (QRCS…PEHS) and 270–323 (CPEC…CRLC). A PHD-type 2; degenerate zinc finger spans residues 226–276 (EARCAVCEGPGQLCDLLFCTSCGHHYHGACLDTALTARKRASWQCPECKVC). The RING-type 1; atypical zinc-finger motif lies at 229 to 274 (CAVCEGPGQLCDLLFCTSCGHHYHGACLDTALTARKRASWQCPECK). The RING-type 2; degenerate zinc finger occupies 276 to 321 (CQSCRKPGNDSKMLVCETCDKGYHTFCLKPPMEDLPAHSWKCKTCR). Disordered stretches follow at residues 438–908 (MPLL…SPII) and 922–1315 (LEYP…DDDT). Residues 439 to 642 (PLLPPPEESP…VSRLSPPPEE (204 aa)) are 15 X 5 AA repeats of S/P-P-P-E/P-E/A. Residues 440–463 (LLPPPEESPLSPPPEESPTSPPPE) are compositionally biased toward pro residues. A run of 4 repeats spans residues 442-446 (PPPEE), 460-464 (PPPEA), 469-473 (PPTEE), and 477-481 (SPPPE). The span at 464–475 (ASRLSPPTEESP) shows a compositional bias: low complexity. Composition is skewed to pro residues over residues 490–512 (GCPPSPALDTPLSPPPEASPLSP) and 519–560 (LSPP…PPPE). A run of 4 repeats spans residues 520-524 (SPPPE), 529-533 (SPPPE), 538-542 (SPPPE), and 547-551 (SPPPE). A compositionally biased stretch (low complexity) spans 561-572 (ASRLFPPFEESP). Positions 573-614 (LSPPPEDSPLSPPPEASRLSPPPEDSPMSPPPEDSPMSPPPE) are enriched in pro residues. 4 repeat units span residues 574–578 (SPPPE), 583–587 (SPPPE), 592–596 (SPPPE), and 610–614 (SPPPE). Residues 619-636 (LPLPVLSHLSPLPEVSRL) show a composition bias toward low complexity. The stretch at 637 to 641 (SPPPE) is repeat 15. Pro residues predominate over residues 637-677 (SPPPEESPLSPPPEDSPASPPPEASRLSPPPEDSPASPPPE). Over residues 696-712 (DSLVSLPMEESPLSPLP) the composition is skewed to low complexity. S727 bears the Phosphoserine mark. Composition is skewed to low complexity over residues 735-755 (LCPQPEELPLSPQSEEPCLSP), 836-851 (PSQSSAPKELSLFSPS), and 876-893 (LPEELPLSLSGEPVLSPQ). Composition is skewed to pro residues over residues 894–908 (LMPPDPLPPPLSPII), 959–973 (EPVPPMILPPSPGSP), and 985–1012 (LPPPCSPLLPHSLPPPTPPPSHCSPPAL). The span at 1013-1023 (PLSVPSPLSPV) shows a compositional bias: low complexity. Basic and acidic residues predominate over residues 1033 to 1045 (AELHEMETDKGPE). 3 PHD-type zinc fingers span residues 1071–1124 (PSPA…PMEV), 1121–1171 (PMEV…SQGD), and 1198–1253 (LGVS…SPAR). S1107 is modified (phosphoserine). A compositionally biased stretch (polar residues) spans 1163–1172 (EISNLSQGDA). The RING-type 3; atypical zinc-finger motif lies at 1201–1251 (STDVSPARDEGSLRLCTDSLPETDDSLLCDTGTATSGGKAEGDKGRRRSSP). S1205 is subject to Phosphoserine. Phosphothreonine is present on T1223. Residue S1226 is modified to Phosphoserine. Over residues 1245–1258 (GRRRSSPARSRIKQ) the composition is skewed to basic residues. At S1562 the chain carries Phosphoserine. Disordered regions lie at residues 1566–1721 (KRRQ…SKLE), 1751–1846 (GRPG…MESK), 1886–1962 (GLAL…SLQR), and 2095–2641 (SADG…QRQR). The segment covering 1593-1608 (PDDKKDGDLDTDDLLK) has biased composition (basic and acidic residues). Residue S1627 is modified to Phosphoserine. Residues 1631–1641 (ELGKEETEESK) show a composition bias toward basic and acidic residues. 2 stretches are compositionally biased toward basic residues: residues 1658–1668 (RQRKSHTRVKR) and 1709–1718 (KQQRRARKKS). Positions 1762–1782 (PRADGGSDRKELMTAMHKGDD) are enriched in basic and acidic residues. S1791 bears the Phosphoserine mark. T1822 carries the post-translational modification Phosphothreonine. The span at 1831-1846 (DLDRIPTEELPKMESK) shows a compositional bias: basic and acidic residues. Low complexity-rich tracts occupy residues 1886-1896 (GLALGSLPSSS) and 1936-1947 (TTPSTPTTPTTE). Pro residues predominate over residues 2151–2166 (PTYPPYPSPTGAPAQP). A compositionally biased stretch (low complexity) spans 2170–2181 (GTTTRPGTGQPG). S2196 is subject to Phosphoserine. T2197 bears the Phosphothreonine mark. N6-acetyllysine is present on K2203. A phosphoserine mark is found at S2217 and S2231. Residues 2237–2249 (ESRKSLEVKKEEL) show a composition bias toward basic and acidic residues. S2266, S2268, and S2299 each carry phosphoserine. 2 stretches are compositionally biased toward pro residues: residues 2308–2322 (EPPPAQALAPSPPSH) and 2331–2359 (YPDPYAQPPLTPRPQPPPPESCCAPPPRS). Residues 2366–2388 (SRVPASPQSQSSSQSPLTPRPLS) show a composition bias toward low complexity. Polar residues predominate over residues 2470–2486 (GQPTNFARSPGTGTFVG). R2492 carries the asymmetric dimethylarginine modification. Residues 2504 to 2514 (LKPPVPQPGLP) are compositionally biased toward pro residues. Low complexity predominate over residues 2546 to 2557 (PSGSPLGPNSGP). Phosphoserine is present on S2597. A compositionally biased stretch (low complexity) spans 2610-2622 (SSSSLATPELSSA). Residues 2627–2665 (ISSLSQTELEKQRQRQRLRELLIRQQIQRNTLRQEKETA) are a coiled coil. Residues 2644-2648 (LRELL) carry the LXXLL motif 1 motif. The tract at residues 2655 to 2806 (RNTLRQEKET…QLWQQQQQQQ (152 aa)) is disordered. Positions 2665 to 2680 (AAAAAGAVGPPGNWGA) are enriched in low complexity. Polar residues-rich tracts occupy residues 2691–2704 (SRGQTPFTGSQDRS) and 2739–2748 (PSSMDMNSRQ). Positions 2768–2813 (LQQQQQQQQQQQQQQQQQQQQQQQQQQQQQLWQQQQQQQQQQQQQA) form a coiled coil. Over residues 2769–2806 (QQQQQQQQQQQQQQQQQQQQQQQQQQQQQLWQQQQQQQ) the composition is skewed to low complexity. R2829 carries the asymmetric dimethylarginine modification. An LXXLL motif 2 motif is present at residues 3030–3034 (LDDLL). Residues 3069–3104 (NEKAEREALLRGVEPVSLGPEERPPPAPDNSEPRLT) are disordered. K3071 bears the N6-acetyllysine mark. Phosphoserine is present on residues S3122 and S3193. Disordered regions lie at residues 3129–3193 (NTPK…LNPS) and 3271–3326 (QQQQ…QSMV). Residues 3271–3284 (QQQQQQQQQQQQQQ) are compositionally biased toward low complexity. K3430 carries the N6-acetyllysine modification. Disordered stretches follow at residues 3460–3496 (SGGSGSDLQNHVAPGSGQERNAGDPAQPRPNPPTFAQ), 3593–3617 (RNKQQQQQQQQQQQQQQQHSAVLAV), 3633–3661 (LLPAHGLQPPQAPPGGQAGGLRLPPGGMV), and 3678–3704 (QQQQQHSGVAGSLTGPPGSFFPGNLAL). Residues 3559–3613 (EKLKLVTEQQSKIQKQLDQVRKQQKEHTNLMAEYRNKQQQQQQQQQQQQQQQHSA) adopt a coiled-coil conformation. The segment covering 3596–3610 (QQQQQQQQQQQQQQQ) has biased composition (low complexity). A coiled-coil region spans residues 3712–3747 (RLLQERQLQLQQQRMQLAQKLQQQQQQQQQQQQQQH). R3725 is modified (asymmetric dimethylarginine). Disordered regions lie at residues 3760 to 3780 (PGVQNQALGPKPQGLLPPSNH) and 3808 to 3827 (LQQQQQQQQHSGALGPQGPH). 2 coiled-coil regions span residues 3854-3883 (RLLTAQQQQQQQQQQQQQQQQQQQQQQQQQ) and 3912-4052 (SLQQ…QVTL). A disordered region spans residues 4053-4249 (GPGLPVKPLQ…QGPPGAGVMP (197 aa)). Composition is skewed to low complexity over residues 4128-4159 (SQLLLVQSQAQSQATSVQLQPPLRLPGQPQPQ), 4172-4183 (GQQLGSGSSSES), and 4226-4240 (GSQPPKSGPAPQSGQ). The residue at position 4255 (R4255) is an Asymmetric dimethylarginine. S4272 is subject to Phosphoserine. The short motif at 4279-4283 (LQALL) is the LXXLL motif 3 element. The disordered stretch occupies residues 4290-4452 (QSQAVRQTPP…SSLVPGHLDQ (163 aa)). Residues 4294-4305 (VRQTPPFQEPGT) show a composition bias toward polar residues. The span at 4307-4322 (PSPLQGLLGCQPQPGG) shows a compositional bias: low complexity. Positions 4310–4314 (LQGLL) match the LXXLL motif 4 motif. A compositionally biased stretch (polar residues) spans 4379 to 4391 (QLPSPSAQLTPTH). Residue S4410 is modified to Phosphoserine. Over residues 4432–4445 (DNLTEAQKPEQSSL) the composition is skewed to polar residues. The short motif at 4514–4518 (LQKLL) is the LXXLL motif 5 element. K4516 bears the N6-acetyllysine mark. Disordered regions lie at residues 4553–4596 (LQGT…EDGV), 4664–4716 (KNNL…EGAL), and 4729–4778 (AALP…QLGS). A compositionally biased stretch (pro residues) spans 4670–4684 (PPTPPSSLPPTPPPS). S4789 bears the Phosphoserine mark. K4807 is covalently cross-linked (Glycyl lysine isopeptide (Lys-Gly) (interchain with G-Cter in SUMO2)). K4827 is modified (N6-acetyllysine). The RING-type 4; degenerate zinc finger occupies 4829–4874 (KGSEVSVMLTVSAAAAKNLNGVMVAVAELLSMKIPNSYEVLFPDGP). The segment at 4877–4908 (AGLEPKKGEAEGPGGKEKGLSGKGPDTGPDWL) is disordered. The segment covering 4879 to 4896 (LEPKKGEAEGPGGKEKGL) has biased composition (basic and acidic residues). Residue K4931 forms a Glycyl lysine isopeptide (Lys-Gly) (interchain with G-Cter in SUMO2) linkage. The tract at residues 4956–5031 (QLSAPPPEEP…SEDSRPPRLK (76 aa)) is disordered. Residues 4959–4982 (APPPEEPSPPPSPLAPSPASPPAE) are compositionally biased toward pro residues. Residues 5017-5027 (RPPEESEDSRP) are compositionally biased toward basic and acidic residues. The short motif at 5041–5045 (LRLLL) is the LXXLL motif 6 element. The segment at 5080–5120 (NRRCCFCHEEGDGATDGPARLLNLDLDLWVHLNCALWSTEV) adopts a C2HC pre-PHD-type 2 zinc-finger fold. The PHD-type 7 zinc-finger motif lies at 5141–5188 (TKCSLCQRTGATSSCNRMRCPNVYHFACAIRAKCMFFKDKTMLCPVHK). The 61-residue stretch at 5226–5286 (LHMFRVGGLV…CCYRCSISEN (61 aa)) folds into the FYR N-terminal domain. Residues 5287 to 5372 (NGRPEFVIKV…ESCQNYLFRY (86 aa)) form the FYR C-terminal domain. Residues 5388–5393 (GCARSE) carry the WDR5 interaction motif (WIN) motif. The SET domain maps to 5448–5564 (NNVYLARSRI…KGEELTYDYQ (117 aa)). S-adenosyl-L-methionine contacts are provided by residues Y5502 and 5525–5526 (NH). Residues C5528, C5576, C5578, and C5583 each coordinate Zn(2+). Residues 5572–5588 (HKIPCHCGAWNCRKWMN) enclose the Post-SET domain.

This sequence belongs to the class V-like SAM-binding methyltransferase superfamily. Histone-lysine methyltransferase family. TRX/MLL subfamily. As to quaternary structure, component of the MLL2 complex (also named ASCOM complex), at least composed of catalytic subunit KMT2D/MLL2, ASH2L, RBBP5, WDR5, NCOA6, DPY30, KDM6A, PAXIP1/PTIP, PAGR1 and alpha- and beta-tubulin. Forms a core complex with the evolutionary conserved subcomplex WRAD composed of WDR5, RBBP5, ASH2L/ASH2 and DPY30 subunits; WRAD differentially stimulates the methyltransferase activity. Interacts with ESR1; interaction is direct. Interacts (via WIN motif) with WDR5.

Its subcellular location is the nucleus. The catalysed reaction is L-lysyl(4)-[histone H3] + S-adenosyl-L-methionine = N(6)-methyl-L-lysyl(4)-[histone H3] + S-adenosyl-L-homocysteine + H(+). Its function is as follows. Histone methyltransferase that catalyzes methyl group transfer from S-adenosyl-L-methionine to the epsilon-amino group of 'Lys-4' of histone H3 (H3K4). Part of chromatin remodeling machinery predominantly forms H3K4me1 methylation marks at active chromatin sites where transcription and DNA repair take place. Acts as a coactivator for estrogen receptor by being recruited by ESR1, thereby activating transcription. The chain is Histone-lysine N-methyltransferase 2D (Kmt2d) from Mus musculus (Mouse).